A 127-amino-acid polypeptide reads, in one-letter code: Stationary phase protein 3 (127 aa).

2 consecutive transmembrane segments (helical) span residues 29–49 and 63–83; these read LFLF…FYVI and ANSI…CFFL. A glycan (N-linked (GlcNAc...) asparagine) is linked at Asn86.

Its subcellular location is the membrane. Functionally, required for survival during stationary phase. The polypeptide is Stationary phase protein 3 (SPG3) (Saccharomyces cerevisiae (strain ATCC 204508 / S288c) (Baker's yeast)).